A 270-amino-acid polypeptide reads, in one-letter code: Small ribosomal subunit protein eS1 (270 aa).

Residues 235–270 form a disordered region; the sequence is GTSKGGAASTAAVAKGEEGVKVDRPEGYEPPVLETV. A compositionally biased stretch (low complexity) spans 239–248; that stretch reads GGAASTAAVA. The span at 249 to 261 shows a compositional bias: basic and acidic residues; the sequence is KGEEGVKVDRPEG.

Belongs to the eukaryotic ribosomal protein eS1 family. As to quaternary structure, component of the small ribosomal subunit. Mature ribosomes consist of a small (40S) and a large (60S) subunit. The 40S subunit contains about 33 different proteins and 1 molecule of RNA (18S). The 60S subunit contains about 49 different proteins and 3 molecules of RNA (28S, 5.8S and 5S).

It is found in the cytoplasm. The polypeptide is Small ribosomal subunit protein eS1 (Ixodes scapularis (Black-legged tick)).